A 375-amino-acid polypeptide reads, in one-letter code: Succinyl-diaminopimelate desuccinylase (375 aa).

Histidine 66 serves as a coordination point for Zn(2+). Aspartate 68 is a catalytic residue. Aspartate 99 is a binding site for Zn(2+). The active-site Proton acceptor is glutamate 133. Zn(2+)-binding residues include glutamate 134, glutamate 162, and histidine 348.

This sequence belongs to the peptidase M20A family. DapE subfamily. In terms of assembly, homodimer. Zn(2+) serves as cofactor. It depends on Co(2+) as a cofactor.

It carries out the reaction N-succinyl-(2S,6S)-2,6-diaminopimelate + H2O = (2S,6S)-2,6-diaminopimelate + succinate. It functions in the pathway amino-acid biosynthesis; L-lysine biosynthesis via DAP pathway; LL-2,6-diaminopimelate from (S)-tetrahydrodipicolinate (succinylase route): step 3/3. Catalyzes the hydrolysis of N-succinyl-L,L-diaminopimelic acid (SDAP), forming succinate and LL-2,6-diaminopimelate (DAP), an intermediate involved in the bacterial biosynthesis of lysine and meso-diaminopimelic acid, an essential component of bacterial cell walls. The sequence is that of Succinyl-diaminopimelate desuccinylase from Escherichia coli O6:K15:H31 (strain 536 / UPEC).